We begin with the raw amino-acid sequence, 962 residues long: Leucine-rich repeat-containing G-protein coupled receptor 6 (962 aa).

Positions 1-16 (MLVVLLILHAVSCAHS) are cleaved as a signal peptide. The 41-residue stretch at 20–60 (PGAAVPVKQCPSACQCEEDGILLLVDCSEQGLSSVPTDLSP) folds into the LRRNT domain. 17 LRR repeats span residues 38-58 (DGIL…PTDL), 59-82 (SPLT…AFRN), 83-106 (LHFL…MLQG), 107-131 (LYNL…PWEL), 133-154 (NLLS…TLSG), 155-178 (MRSL…ALND), 179-202 (LSSL…AFRN), 203-226 (LSNL…CFEG), 228-250 (HSLE…IRTL), 251-273 (AKLQ…AFVG), 275-297 (PLLQ…AFQF), 298-321 (LPKL…LKGT), 322-344 (TSLQ…LCHL), 345-368 (LPKL…YHCT), 370-390 (LQEI…TFQQ), 391-414 (LGSL…AFFS), and 416-438 (QSLI…GLTS). N-linked (GlcNAc...) asparagine glycosylation is present at Asn-71. N-linked (GlcNAc...) asparagine glycosylation occurs at Asn-202. The next 7 membrane-spanning stretches (helical) occupy residues 559 to 579 (GMWL…LTVF), 590 to 610 (FIIG…GTLA), 647 to 669 (SILF…RAYG), 679 to 699 (AAAV…LIGV), 723 to 743 (FMVA…GTYI), 766 to 786 (VAWL…LTFS), and 801 to 821 (SVVL…YLLF). Cys-633 and Cys-708 are oxidised to a cystine.

The protein belongs to the G-protein coupled receptor 1 family.

Its subcellular location is the cell membrane. Its function is as follows. Receptor for R-spondins that potentiates the canonical Wnt signaling pathway. Upon binding to R-spondins (rspo1, rspo2, rspo3 or rspo4), associates with phosphorylated lrp6 and frizzled receptors that are activated by extracellular Wnt receptors, triggering the canonical Wnt signaling pathway to increase expression of target genes. In contrast to classical G-protein coupled receptors, does not activate heterotrimeric G-proteins to transduce the signal. This Danio rerio (Zebrafish) protein is Leucine-rich repeat-containing G-protein coupled receptor 6 (lgr6).